We begin with the raw amino-acid sequence, 84 residues long: Small ribosomal subunit protein uS17 (84 aa).

Belongs to the universal ribosomal protein uS17 family. Part of the 30S ribosomal subunit.

Functionally, one of the primary rRNA binding proteins, it binds specifically to the 5'-end of 16S ribosomal RNA. This Aliivibrio salmonicida (strain LFI1238) (Vibrio salmonicida (strain LFI1238)) protein is Small ribosomal subunit protein uS17.